A 141-amino-acid chain; its full sequence is MAPKAAEKKPSTGGKAPAGGKAPAEKKEAGKKTAAAASGDKKKRGKTRKETYSSYIYKVLKQVHPDTGISTRAMSILNSFVNDIFERVATEASKLAAYNKKSTISSREIQTSVRLILPGELAKHAVSEGTKAVTKYSSSAK.

Residues 1-10 (MAPKAAEKKP) show a composition bias toward basic and acidic residues. The segment at 1–49 (MAPKAAEKKPSTGGKAPAGGKAPAEKKEAGKKTAAAASGDKKKRGKTRK) is disordered. Residues Lys8 and Lys9 each carry the N6-acetyllysine; alternate modification. Residues Lys8 and Lys9 each participate in a glycyl lysine isopeptide (Lys-Gly) (interchain with G-Cter in SUMO); alternate cross-link. Over residues 11 to 22 (STGGKAPAGGKA) the composition is skewed to low complexity. Residue Lys15 is modified to N6-acetyllysine. N6-acetyllysine; alternate is present on Lys26. Residue Lys26 forms a Glycyl lysine isopeptide (Lys-Gly) (interchain with G-Cter in SUMO); alternate linkage. A Glycyl lysine isopeptide (Lys-Gly) (interchain with G-Cter in SUMO) cross-link involves residue Lys27. Lys135 is covalently cross-linked (Glycyl lysine isopeptide (Lys-Gly) (interchain with G-Cter in ubiquitin)).

Belongs to the histone H2B family. In terms of assembly, the nucleosome is a histone octamer containing two molecules each of H2A, H2B, H3 and H4 assembled in one H3-H4 heterotetramer and two H2A-H2B heterodimers. The octamer wraps approximately 147 bp of DNA. In terms of processing, monoubiquitinated by the ubc2-bre1 complex to form H2BK123ub1. H2BK123ub1 gives a specific tag for epigenetic transcriptional activation and is also prerequisite for H3K4me and H3K79me formation. H2BK123ub1 also modulates the formation of double-strand breaks during meiosis and is a prerequisite for DNA-damage checkpoint activation. Acetylated by gcn5 to form H2BK11ac and H2BK16ac. H2BK16ac can also be formed by esa1. Acetylation of N-terminal lysines and particularly formation of H2BK11acK16ac has a positive effect on transcription. Post-translationally, sumoylation to form H2BK6su or H2BK7su, and probably also H2BK16su or H2BK17su, occurs preferentially near the telomeres and represses gene transcription.

Its subcellular location is the nucleus. The protein resides in the chromosome. Its function is as follows. Core component of nucleosome. Nucleosomes wrap and compact DNA into chromatin, limiting DNA accessibility to the cellular machineries which require DNA as a template. Histones thereby play a central role in transcription regulation, DNA repair, DNA replication and chromosomal stability. DNA accessibility is regulated via a complex set of post-translational modifications of histones, also called histone code, and nucleosome remodeling. In Aspergillus oryzae (strain ATCC 42149 / RIB 40) (Yellow koji mold), this protein is Histone H2B (htb1).